Here is a 508-residue protein sequence, read N- to C-terminus: Lysine--tRNA ligase (508 aa).

Mg(2+) is bound by residues Glu-418 and Glu-425.

Belongs to the class-II aminoacyl-tRNA synthetase family. In terms of assembly, homodimer. The cofactor is Mg(2+).

The protein localises to the cytoplasm. The catalysed reaction is tRNA(Lys) + L-lysine + ATP = L-lysyl-tRNA(Lys) + AMP + diphosphate. The polypeptide is Lysine--tRNA ligase (Burkholderia pseudomallei (strain 1710b)).